The chain runs to 271 residues: Transcription factor PU.1 (271 aa).

Residues 124–164 (LSPAHQQSSDEEEGERQSPPLEVSDGEADGLEPGPGLLHGE) form a disordered region. 2 positions are modified to phosphoserine: serine 141 and serine 147. Over residues 154-164 (LEPGPGLLHGE) the composition is skewed to low complexity. The segment at residues 171–254 (IRLYQFLLDL…VKKKLTYQFS (84 aa)) is a DNA-binding region (ETS). DNA-binding residues include lysine 218, arginine 231, arginine 234, and lysine 244.

It belongs to the ETS family. Binds DNA as a monomer. Can form homomers. Directly interacts with CEBPD/NF-IL6-beta; this interaction does not affect DNA-binding properties of each partner. Interacts with NONO/p54(nrb). Interacts with RUNX1/AML1. Interacts with GFI1; the interaction represses SPI1 transcriptional activity, hence blocks SPI1-induced macrophage differentiation of myeloid progenitor cells. Interacts with CEBPE. Interacts with IRF4/Pip and IRF8. Interacts with JUN. Interacts with RB1. Interacts with TBP.

The protein localises to the nucleus. Transcriptional activity at macrophage-specific genes is inhibited by interaction with GFI1, which results in the inhibition of SPI1-induced macrophage differentiation of myeloid progenitor cells, but not that of the granulocyte lineage. Functionally, pioneer transcription factor, which controls hematopoietic cell fate by decompacting stem cell heterochromatin and allowing other transcription factors to enter otherwise inaccessible genomic sites. Once in open chromatin, can directly control gene expression by binding genetic regulatory elements and can also more broadly influence transcription by recruiting transcription factors, such as interferon regulatory factors (IRFs), to otherwise inaccessible genomic regions. Transcriptionally activates genes important for myeloid and lymphoid lineages, such as CSF1R or FCER1A. Transcriptional activation from certain promoters, possibly containing low affinity binding sites, is achieved cooperatively with other transcription factors. FCER1A transactivation is achieved in cooperation with GATA1. May be particularly important for the pro- to pre-B cell transition. Binds (via the ETS domain) onto the purine-rich DNA core sequence 5'-GAGGAA-3', also known as the PU-box. In vitro can bind RNA and interfere with pre-mRNA splicing. This chain is Transcription factor PU.1 (Spi1), found in Rattus norvegicus (Rat).